We begin with the raw amino-acid sequence, 79 residues long: Crassicorin-I (79 aa).

An N-terminal signal peptide occupies residues 1–19; it reads MKLFLVSIVLVGMLVLAAA. A propeptide spanning residues 20-39 is cleaved from the precursor; it reads RPERDIDSFDEQEEKGFVKR. Intrachain disulfides connect Cys-43-Cys-76, Cys-45-Cys-69, and Cys-59-Cys-77.

It belongs to the sea anemone type 3 (BDS) potassium channel toxin family. As to expression, highly expressed by the mesenteries. Moderately expressed by the pharynx. Weakly expressed by the gonad and pedal disk. No expression in tentacle.

The protein resides in the secreted. The protein localises to the nematocyst. Functionally, peptide with both antimicrobial and neurotoxin activities. Cationic AMP with antibacterial activity against both Gram-positive bacteria (B.subtilis, MIC=11.49 ug/mL) and Gram-negative bacteria (E.coli (MIC=12.21 ug/mL) and S.enterica (MIC=11.95 ug/mL)). Shows no significant antimicrobial activity against bacteria S.aureus and P.aeruginosa, as well as the fungus C.albicans. In vivo, induces reversible paralytic activity towards the shrimp P.paucidens. May act by impairing sodium or potassium channels in the prey. In Urticina crassicornis (Mottled anemone), this protein is Crassicorin-I.